We begin with the raw amino-acid sequence, 238 residues long: tRNA (guanine-N(7)-)-methyltransferase (238 aa).

Positions methionine 1–aspartate 12 are enriched in polar residues. A disordered region spans residues methionine 1–serine 20. Residues glutamate 70, aspartate 95, aspartate 122, and aspartate 145 each coordinate S-adenosyl-L-methionine. Aspartate 145 is an active-site residue. Substrate-binding positions include lysine 149, aspartate 181, and threonine 216–glutamate 219.

It belongs to the class I-like SAM-binding methyltransferase superfamily. TrmB family.

The catalysed reaction is guanosine(46) in tRNA + S-adenosyl-L-methionine = N(7)-methylguanosine(46) in tRNA + S-adenosyl-L-homocysteine. Its pathway is tRNA modification; N(7)-methylguanine-tRNA biosynthesis. Its function is as follows. Catalyzes the formation of N(7)-methylguanine at position 46 (m7G46) in tRNA. This Neisseria gonorrhoeae (strain NCCP11945) protein is tRNA (guanine-N(7)-)-methyltransferase.